A 503-amino-acid chain; its full sequence is Probable cytosol aminopeptidase (503 aa).

Mn(2+) contacts are provided by lysine 270 and aspartate 275. The active site involves lysine 282. The Mn(2+) site is built by aspartate 293, aspartate 352, and glutamate 354. Arginine 356 is an active-site residue.

The protein belongs to the peptidase M17 family. Mn(2+) is required as a cofactor.

It is found in the cytoplasm. It carries out the reaction Release of an N-terminal amino acid, Xaa-|-Yaa-, in which Xaa is preferably Leu, but may be other amino acids including Pro although not Arg or Lys, and Yaa may be Pro. Amino acid amides and methyl esters are also readily hydrolyzed, but rates on arylamides are exceedingly low.. The catalysed reaction is Release of an N-terminal amino acid, preferentially leucine, but not glutamic or aspartic acids.. Its function is as follows. Presumably involved in the processing and regular turnover of intracellular proteins. Catalyzes the removal of unsubstituted N-terminal amino acids from various peptides. The sequence is that of Probable cytosol aminopeptidase from Serratia proteamaculans (strain 568).